The primary structure comprises 339 residues: Glucokinase (339 aa).

ATP is bound at residue Gly16–Thr21.

This sequence belongs to the bacterial glucokinase family.

The protein localises to the cytoplasm. It carries out the reaction D-glucose + ATP = D-glucose 6-phosphate + ADP + H(+). The sequence is that of Glucokinase from Sinorhizobium fredii (strain NBRC 101917 / NGR234).